A 198-amino-acid polypeptide reads, in one-letter code: Na(+)-translocating NADH-quinone reductase subunit E (198 aa).

Helical transmembrane passes span Ala-11 to Val-31, Val-35 to Val-55, Phe-77 to Ile-97, Gly-110 to Val-130, Val-140 to Ile-160, and Leu-176 to Val-196.

This sequence belongs to the NqrDE/RnfAE family. In terms of assembly, composed of six subunits; NqrA, NqrB, NqrC, NqrD, NqrE and NqrF.

The protein resides in the cell inner membrane. The enzyme catalyses a ubiquinone + n Na(+)(in) + NADH + H(+) = a ubiquinol + n Na(+)(out) + NAD(+). Its function is as follows. NQR complex catalyzes the reduction of ubiquinone-1 to ubiquinol by two successive reactions, coupled with the transport of Na(+) ions from the cytoplasm to the periplasm. NqrA to NqrE are probably involved in the second step, the conversion of ubisemiquinone to ubiquinol. The protein is Na(+)-translocating NADH-quinone reductase subunit E of Serratia proteamaculans (strain 568).